Consider the following 371-residue polypeptide: Cytochrome b (371 aa).

Helical transmembrane passes span 25 to 45, 69 to 90, 105 to 125, and 170 to 190; these read FGSMLLTCLILQITTGFFLAI, WIMQNLHAIGASMFFICIYIHI, WLSGTTLLITLMATAFFGYVL, and FFALHFILPFAIISLSSIHII. Residues His-75 and His-89 each contribute to the heme b site. Heme b-binding residues include His-174 and His-188. Residue His-193 coordinates a ubiquinone. 4 consecutive transmembrane segments (helical) span residues 218–238, 280–300, 312–332, and 339–358; these read YKDTLMTISLFILMFTILSFS, LGGTLALLMSVTILMTAPFTH, LAQMAFWTLIATFITITWTAS, and FIIISQMTSILYFLFFIMNP.

It belongs to the cytochrome b family. In terms of assembly, the cytochrome bc1 complex contains 3 respiratory subunits (MT-CYB, CYC1 and UQCRFS1), 2 core proteins (UQCRC1 and UQCRC2) and probably 6 low-molecular weight proteins. It depends on heme b as a cofactor.

It is found in the mitochondrion inner membrane. Its function is as follows. Component of the ubiquinol-cytochrome c reductase complex (complex III or cytochrome b-c1 complex) that is part of the mitochondrial respiratory chain. The b-c1 complex mediates electron transfer from ubiquinol to cytochrome c. Contributes to the generation of a proton gradient across the mitochondrial membrane that is then used for ATP synthesis. The protein is Cytochrome b (MT-CYB) of Sinomicrurus kelloggi (Kellogg's coral snake).